We begin with the raw amino-acid sequence, 304 residues long: Ornithine carbamoyltransferase (304 aa).

Carbamoyl phosphate-binding positions include 47 to 50, Arg98, and 125 to 128; these read STRT and HPCQ. L-ornithine-binding positions include Asn156, Asp221, and 225 to 226; that span reads SM. Residues 262 to 263 and Arg290 contribute to the carbamoyl phosphate site; that span reads CL.

This sequence belongs to the aspartate/ornithine carbamoyltransferase superfamily. OTCase family.

Its subcellular location is the cytoplasm. It catalyses the reaction carbamoyl phosphate + L-ornithine = L-citrulline + phosphate + H(+). The protein operates within amino-acid biosynthesis; L-arginine biosynthesis; L-arginine from L-ornithine and carbamoyl phosphate: step 1/3. Its function is as follows. Reversibly catalyzes the transfer of the carbamoyl group from carbamoyl phosphate (CP) to the N(epsilon) atom of ornithine (ORN) to produce L-citrulline. In Methanococcus maripaludis (strain C5 / ATCC BAA-1333), this protein is Ornithine carbamoyltransferase.